The sequence spans 209 residues: Large ribosomal subunit protein uL3 (209 aa).

The disordered stretch occupies residues 133 to 153 (THGNSLSHRVPGSIGQNQTPG). Residue Gln150 is modified to N5-methylglutamine.

It belongs to the universal ribosomal protein uL3 family. Part of the 50S ribosomal subunit. Forms a cluster with proteins L14 and L19. In terms of processing, methylated by PrmB.

In terms of biological role, one of the primary rRNA binding proteins, it binds directly near the 3'-end of the 23S rRNA, where it nucleates assembly of the 50S subunit. The protein is Large ribosomal subunit protein uL3 of Pectobacterium carotovorum subsp. carotovorum (strain PC1).